Reading from the N-terminus, the 259-residue chain is Undecaprenyl-diphosphatase 4 (259 aa).

The next 8 helical transmembrane spans lie at 1–21 (MNWL…FLPI), 39–59 (AGLF…FIYY), 71–91 (FSKL…IGLL), 99–119 (ISKT…FLYV), 133–153 (ITYK…FPAI), 173–193 (AAYF…ILQF), 208–228 (SLIV…SWMI), and 239–259 (FAYY…TDVF).

This sequence belongs to the UppP family.

It is found in the cell membrane. It carries out the reaction di-trans,octa-cis-undecaprenyl diphosphate + H2O = di-trans,octa-cis-undecaprenyl phosphate + phosphate + H(+). Catalyzes the dephosphorylation of undecaprenyl diphosphate (UPP). Confers resistance to bacitracin. This chain is Undecaprenyl-diphosphatase 4, found in Bacillus thuringiensis subsp. konkukian (strain 97-27).